The primary structure comprises 332 residues: ADP-L-glycero-D-manno-heptose-6-epimerase (332 aa).

Residues 10 to 11 (MI), 31 to 32 (DK), Lys-38, Lys-53, 75 to 79 (MGACS), and Asn-92 contribute to the NADP(+) site. Tyr-145 serves as the catalytic Proton acceptor. Lys-149 provides a ligand contact to NADP(+). Asn-173 is a binding site for substrate. Val-174 and Lys-182 together coordinate NADP(+). Lys-182 functions as the Proton acceptor in the catalytic mechanism. Substrate contacts are provided by residues Arg-184, His-191, 205–208 (FKSY), Arg-219, and Tyr-290.

This sequence belongs to the NAD(P)-dependent epimerase/dehydratase family. HldD subfamily. As to quaternary structure, homopentamer. It depends on NADP(+) as a cofactor.

The catalysed reaction is ADP-D-glycero-beta-D-manno-heptose = ADP-L-glycero-beta-D-manno-heptose. Its pathway is nucleotide-sugar biosynthesis; ADP-L-glycero-beta-D-manno-heptose biosynthesis; ADP-L-glycero-beta-D-manno-heptose from D-glycero-beta-D-manno-heptose 7-phosphate: step 4/4. Functionally, catalyzes the interconversion between ADP-D-glycero-beta-D-manno-heptose and ADP-L-glycero-beta-D-manno-heptose via an epimerization at carbon 6 of the heptose. The polypeptide is ADP-L-glycero-D-manno-heptose-6-epimerase (Fusobacterium nucleatum subsp. nucleatum (strain ATCC 25586 / DSM 15643 / BCRC 10681 / CIP 101130 / JCM 8532 / KCTC 2640 / LMG 13131 / VPI 4355)).